Reading from the N-terminus, the 175-residue chain is Avenin-like a3 (175 aa).

The first 19 residues, 1–19, serve as a signal peptide directing secretion; that stretch reads MKTMFLLALLAFTATSAVA.

Belongs to the prolamin family. Post-translationally, contains 7 disulfide bonds.

Its function is as follows. Seed storage protein. Not integrated in the gluten polymer through disulfide bonds, unless incorporated by reduction and reoxidation during dough making. Increases dough strength and bread volume, but decreases dough stability when added into a base wheat flour. The protein is Avenin-like a3 of Triticum aestivum (Wheat).